Here is a 410-residue protein sequence, read N- to C-terminus: Arginine deiminase (410 aa).

Catalysis depends on Cys-400, which acts as the Amidino-cysteine intermediate.

Belongs to the arginine deiminase family.

The protein resides in the cytoplasm. It catalyses the reaction L-arginine + H2O = L-citrulline + NH4(+). Its pathway is amino-acid degradation; L-arginine degradation via ADI pathway; carbamoyl phosphate from L-arginine: step 1/2. The polypeptide is Arginine deiminase (arcA) (Lactococcus lactis subsp. lactis (strain IL1403) (Streptococcus lactis)).